The following is a 77-amino-acid chain: Large ribosomal subunit protein eL20 (77 aa).

This sequence belongs to the eukaryotic ribosomal protein eL20 family. Part of the 50S ribosomal subunit. Binds 23S rRNA.

This chain is Large ribosomal subunit protein eL20, found in Thermococcus gammatolerans (strain DSM 15229 / JCM 11827 / EJ3).